The primary structure comprises 520 residues: Cytochrome b5 reductase 4 (520 aa).

Met-1 carries the N-acetylmethionine modification. The disordered stretch occupies residues 1 to 27 (MLNVPSQAFPAPGSQQRVASQGRSKVP). Residues 13 to 23 (GSQQRVASQGR) show a composition bias toward polar residues. A Cytochrome b5 heme-binding domain is found at 54-130 (LIEVTEEELK…LKECLVGRMA (77 aa)). Heme contacts are provided by His-89 and His-112. In terms of domain architecture, CS spans 164–255 (PSSPSYDWFQ…KETVSWKCLG (92 aa)). One can recognise an FAD-binding FR-type domain in the interval 272-384 (LYYRQCQLIS…SGPEGNFKVS (113 aa)). Residues 364–379 (DRLQ…GPEG) and 391–423 (DLFL…KVKL) contribute to the FAD site.

This sequence belongs to the flavoprotein pyridine nucleotide cytochrome reductase family. It depends on FAD as a cofactor. Isoform 2 is expressed in testis, brain, skeletal muscle and in the male germline.

Its subcellular location is the endoplasmic reticulum. It catalyses the reaction 2 Fe(III)-[cytochrome b5] + NADH = 2 Fe(II)-[cytochrome b5] + NAD(+) + H(+). Functionally, NADH-cytochrome b5 reductase involved in endoplasmic reticulum stress response pathway. Plays a critical role in protecting pancreatic beta-cells against oxidant stress, possibly by protecting the cell from excess buildup of reactive oxygen species (ROS). In Rattus norvegicus (Rat), this protein is Cytochrome b5 reductase 4 (Cyb5r4).